Consider the following 554-residue polypeptide: Acetyl-S-ACP:malonate ACP transferase (554 aa).

The protein resides in the cytoplasm. It carries out the reaction acetyl-[ACP] + malonate = malonyl-[ACP] + acetate. Alpha subunit of the biotin-independent and biotin-dependent malonate decarboxylase multienzyme complex (EC 4.1.1.88 and EC 7.2.4.4, respectively). Acts as an acyl-carrier protein (ACP) transferase component. This first step in malonate decarboxylation involves the exchange of an acetyl thioester residue bound to the activated ACP subunit for a malonyl thioester residue. Has a weak activity with acetyl-CoA as substrate. The sequence is that of Acetyl-S-ACP:malonate ACP transferase (madA) from Malonomonas rubra.